A 144-amino-acid polypeptide reads, in one-letter code: Universal stress protein F (144 aa).

Belongs to the universal stress protein A family. Homodimer.

The sequence is that of Universal stress protein F (uspF) from Escherichia coli O157:H7.